The sequence spans 858 residues: Beta-galactosidase 6 (858 aa).

A signal peptide spans 1-30; sequence MAAATVGVLLRLLLLPVVVVVSLLVGASRA. The N-linked (GlcNAc...) asparagine glycan is linked to Asn-32. Catalysis depends on Glu-189, which acts as the Proton donor. Glu-258 (nucleophile) is an active-site residue. Asn-259, Asn-482, Asn-507, Asn-595, and Asn-830 each carry an N-linked (GlcNAc...) asparagine glycan. Residues 772–858 form the SUEL-type lectin domain; sequence QTQGPALRLE…KSLVVEAACS (87 aa).

The protein belongs to the glycosyl hydrolase 35 family.

It localises to the secreted. Its subcellular location is the extracellular space. The protein resides in the apoplast. The enzyme catalyses Hydrolysis of terminal non-reducing beta-D-galactose residues in beta-D-galactosides.. Releases galactose by hydrolysis of plant cell wall galactose-containing polysaccharides such as galacto-xyloglucan, pectic galactan and galactan (in vitro). The sequence is that of Beta-galactosidase 6 from Oryza sativa subsp. japonica (Rice).